Consider the following 181-residue polypeptide: MARRGQQPPPQQAPPAQKNQPGKFNPAEFVKPGLTEEEVLEIKEAFDLFDTDGTQSIDPKELKAAMTSLGFEAKNQTIYQMISDLDTDGSGQIDFAEFLKLMTARISERDSKADIQKVFNLFDSERAGVVTLKDLRKVAKELGETMDDSELQEMIDRADSDGDAQVTFEDFYNIMTKKTFA.

Residues 1 to 29 form a disordered region; it reads MARRGQQPPPQQAPPAQKNQPGKFNPAEF. The span at 14–23 shows a compositional bias: low complexity; the sequence is PPAQKNQPGK. 4 consecutive EF-hand domains span residues 37–72, 73–108, 110–145, and 146–181; these read EEVL…LGFE, AKNQ…RISE, DSKA…LGET, and MDDS…KTFA. The Ca(2+) site is built by Asp-50, Asp-52, Thr-54, Ser-56, Glu-61, Asp-86, Asp-88, Ser-90, Gln-92, and Glu-97.

The protein belongs to the centrin family. As to quaternary structure, monomer.

It localises to the cytoplasm. It is found in the cytoskeleton. Its function is as follows. Plays a fundamental role in microtubule organizing center structure and function. Component of the infraciliary lattice (ICL) and the ciliary basal bodies. The protein is Caltractin ICL1a (Icl1a) of Paramecium tetraurelia.